The sequence spans 153 residues: MAKFLSQDQINEYKECFSLYDKQQRGKIKATDLLTVMRCLGASPTPGEAQRHLQTHRIDRNGELDFSTFLTIMHMQIKQEDPKKEILLAMLMADKEKKGYIMASELRSKLMQLGEKLTHKEVEDLFREAGIEPNGKVKYDEFIQKLTIPVRDY.

EF-hand domains are found at residues 8-43 (DQIN…LGAS), 44-79 (PTPG…QIKQ), 81-116 (DPKK…LGEK), and 117-152 (LTHK…PVRD).

This sequence belongs to the calmodulin family. Interacts with MYO7B; the interaction mediates the association of CALML4 with the IMAC/intermicrovillar adhesion complex. Interacts with MYO7A.

It localises to the cell projection. Its subcellular location is the microvillus. As part of the intermicrovillar adhesion complex/IMAC plays a role in epithelial brush border differentiation, controlling microvilli organization and length. Acts as a light chain for MYO7B and is required for efficient targeting of the IMAC to the tips of border brush microvilli. The protein is Calmodulin-like protein 4 (CALML4) of Bos taurus (Bovine).